The primary structure comprises 630 residues: Polygalacturonase-1 non-catalytic subunit beta (630 aa).

Positions 1–27 (MHTKIHLPPCILLLLLFSLPSFNVVVG) are cleaved as a signal peptide. The propeptide occupies 28-108 (GDGESGNPFT…MCAPDLSPSL (81 aa)). Residues asparagine 124, asparagine 142, asparagine 256, asparagine 334, asparagine 369, and asparagine 387 are each glycosylated (N-linked (GlcNAc...) asparagine). A propeptide spanning residues 398–630 (EVNGGKKVNN…ENDMTWAIAD (233 aa)) is cleaved from the precursor. Positions 415–629 (FFREKMLKSG…FENDMTWAIA (215 aa)) constitute a BURP domain.

Interacts with polygalacturonase-2 (isoenzymes PG2A and PG2B) to form heterodimers called polygalacturonase-1 (PG1). Mostly expressed in fruit pericarp. Also detected at low levels in cell wall of roots, leaves and flowers (at protein level).

It is found in the secreted. The protein resides in the extracellular space. The protein localises to the apoplast. Its subcellular location is the cell wall. Non-catalytic subunit of the polygalacturonase isozyme 1 (PG1). Necessary and sufficient to convert the polygalacturonase from its monomeric form PG2 to its heterodimeric form PG1. Seems to limit the depolymerization and solubilization of cell wall polyuronides mediated by PG2 during ripening, probably by recruiting PG2 to form PG1. In Solanum lycopersicum (Tomato), this protein is Polygalacturonase-1 non-catalytic subunit beta (GP1).